The sequence spans 254 residues: DNA repair protein RecO (254 aa).

It belongs to the RecO family.

Functionally, involved in DNA repair and RecF pathway recombination. This chain is DNA repair protein RecO, found in Anaeromyxobacter dehalogenans (strain 2CP-C).